The sequence spans 273 residues: Large ribosomal subunit protein uL2 (273 aa).

The interval 222–273 is disordered; sequence GVAMNPVDHPMGGGEGRSSGGRHPCTPWGVPTKGYRTRKSKRSDKLIVHRRK. The span at 264–273 shows a compositional bias: basic and acidic residues; the sequence is SDKLIVHRRK.

It belongs to the universal ribosomal protein uL2 family. As to quaternary structure, part of the 50S ribosomal subunit. Forms a bridge to the 30S subunit in the 70S ribosome.

In terms of biological role, one of the primary rRNA binding proteins. Required for association of the 30S and 50S subunits to form the 70S ribosome, for tRNA binding and peptide bond formation. It has been suggested to have peptidyltransferase activity; this is somewhat controversial. Makes several contacts with the 16S rRNA in the 70S ribosome. In Syntrophobacter fumaroxidans (strain DSM 10017 / MPOB), this protein is Large ribosomal subunit protein uL2.